The chain runs to 47 residues: MAKGKRTFQPNNRRRARVHGFRLRMRTRAGRSIVSDRRRKGRRTLTA.

This sequence belongs to the bacterial ribosomal protein bL34 family.

This is Large ribosomal subunit protein bL34 (rpmH) from Mycobacterium leprae (strain TN).